Here is a 77-residue protein sequence, read N- to C-terminus: RNA-binding protein Hfq (77 aa).

One can recognise a Sm domain in the interval 10-70 (DAFLNHVRKA…ISTIMPGQPI (61 aa)).

Belongs to the Hfq family. Homohexamer.

Functionally, RNA chaperone that binds small regulatory RNA (sRNAs) and mRNAs to facilitate mRNA translational regulation in response to envelope stress, environmental stress and changes in metabolite concentrations. Also binds with high specificity to tRNAs. This is RNA-binding protein Hfq from Cereibacter sphaeroides (strain ATCC 17029 / ATH 2.4.9) (Rhodobacter sphaeroides).